The sequence spans 214 residues: Glycoprotein Q2 (214 aa).

Positions 1–19 (MHFLVVYILIHFHAYRGMA) are cleaved as a signal peptide. N-linked (GlcNAc...) asparagine; by host glycans are attached at residues Asn41, Asn74, Asn110, and Asn210.

In terms of assembly, interacts with isoform gQ1. The heterodimer gQ1-gQ2 associates with the glycoprotein complex gH-gL to form a tetrameric complex. The gH/gL/gQ1/gQ2 complex binds to human receptor CD46. Glycosylated by host.

The protein resides in the virion membrane. Its subcellular location is the host endoplasmic reticulum-Golgi intermediate compartment. Plays a role in virus entry by participating in host receptor binding at the cell surface. The protein is Glycoprotein Q2 of Human herpesvirus 6A (strain Uganda-1102) (HHV-6 variant A).